Here is a 351-residue protein sequence, read N- to C-terminus: Phosphoribosylformylglycinamidine cyclo-ligase (351 aa).

Belongs to the AIR synthase family.

The protein localises to the cytoplasm. It catalyses the reaction 2-formamido-N(1)-(5-O-phospho-beta-D-ribosyl)acetamidine + ATP = 5-amino-1-(5-phospho-beta-D-ribosyl)imidazole + ADP + phosphate + H(+). It participates in purine metabolism; IMP biosynthesis via de novo pathway; 5-amino-1-(5-phospho-D-ribosyl)imidazole from N(2)-formyl-N(1)-(5-phospho-D-ribosyl)glycinamide: step 2/2. This Xylella fastidiosa (strain Temecula1 / ATCC 700964) protein is Phosphoribosylformylglycinamidine cyclo-ligase.